Here is a 208-residue protein sequence, read N- to C-terminus: Small ribosomal subunit protein uS2 (208 aa).

Residues 189–208 (KPDQDLPVPPEEFETRLVQT) form a disordered region.

This sequence belongs to the universal ribosomal protein uS2 family.

The chain is Small ribosomal subunit protein uS2 from Pyrobaculum arsenaticum (strain DSM 13514 / JCM 11321 / PZ6).